The chain runs to 127 residues: MLKPRITARQLIWISAFLLMLTILMMTWSTLRQQESTLAIRAVNLGASMPDGFSVLHHLDANGIHFKSITPKNDMLLITFDSPAQSAAAKTVLDQTLPHGYVVAQQDDDNETVQWLSRLRESSHRFG.

Topologically, residues 1–10 are cytoplasmic; the sequence is MLKPRITARQ. The helical transmembrane segment at 11–31 threads the bilayer; sequence LIWISAFLLMLTILMMTWSTL. Over 32–127 the chain is Periplasmic; that stretch reads RQQESTLAIR…RLRESSHRFG (96 aa).

This sequence belongs to the MzrA family. As to quaternary structure, interacts with EnvZ.

The protein localises to the cell inner membrane. Its function is as follows. Modulates the activity of the EnvZ/OmpR two-component regulatory system, probably by directly modulating EnvZ enzymatic activity and increasing stability of phosphorylated OmpR. The polypeptide is Modulator protein MzrA (Salmonella agona (strain SL483)).